A 342-amino-acid chain; its full sequence is Zinc transporter ZIP11 (342 aa).

Transmembrane regions (helical) follow at residues 12-32, 44-64, 72-92, 194-214, 263-285, 290-307, and 322-342; these read LLGT…VFIF, LGFA…APAV, GFGA…AAFV, IALL…AVGV, FWYG…FAVV, ILPY…YVVM, and LASW…VGLG.

It belongs to the ZIP transporter (TC 2.A.5) family. Highly expressed in the testes and portions of the digestive system including the stomach, ileum and cecum. In contrast, expressed at very low levels in liver, duodenum, jejunum, and colon.

It localises to the cell membrane. Its subcellular location is the nucleus. The protein localises to the cytoplasm. It is found in the golgi apparatus. It carries out the reaction Zn(2+)(in) = Zn(2+)(out). The enzyme catalyses Cu(2+)(in) = Cu(2+)(out). Functionally, zinc importer that regulates cytosolic zinc concentration either via zinc influx from the extracellular compartment or efflux from intracellular organelles such as Golgi apparatus. May transport copper ions as well. The transport mechanism remains to be elucidated. The sequence is that of Zinc transporter ZIP11 (Slc39a11) from Mus musculus (Mouse).